A 104-amino-acid chain; its full sequence is Secretoglobin family 3A member 1 (104 aa).

Residues 1 to 21 (MKLTTTFLVLCVALLSDSGVA) form the signal peptide.

Belongs to the secretoglobin family. UGRP subfamily. As to quaternary structure, homodimer; disulfide-linked. As to expression, highly expressed in lung, where it localizes to epithelial cells lining the trachea and bronchi. Expression in lung is mainly restricted to bronchi, submucosal glands of the trachea, and tracheal epithelium, with little expression in terminal bronchioles. Expressed in uterus where it localizes to epithelial cells of the uterine glands. Also detected in heart, stomach and small intestine.

It is found in the secreted. Its function is as follows. Secreted cytokine-like protein. Inhibits cell growth in vitro. The sequence is that of Secretoglobin family 3A member 1 (Scgb3a1) from Mus musculus (Mouse).